The chain runs to 199 residues: Imidazoleglycerol-phosphate dehydratase (199 aa).

The protein belongs to the imidazoleglycerol-phosphate dehydratase family.

Its subcellular location is the cytoplasm. The catalysed reaction is D-erythro-1-(imidazol-4-yl)glycerol 3-phosphate = 3-(imidazol-4-yl)-2-oxopropyl phosphate + H2O. Its pathway is amino-acid biosynthesis; L-histidine biosynthesis; L-histidine from 5-phospho-alpha-D-ribose 1-diphosphate: step 6/9. The polypeptide is Imidazoleglycerol-phosphate dehydratase (Lactococcus lactis subsp. cremoris (strain MG1363)).